The primary structure comprises 355 residues: Uroporphyrinogen decarboxylase (355 aa).

Residues 27 to 31, F46, D77, Y154, T209, and H328 contribute to the substrate site; that span reads RQAGR.

Belongs to the uroporphyrinogen decarboxylase family. Homodimer.

Its subcellular location is the cytoplasm. The enzyme catalyses uroporphyrinogen III + 4 H(+) = coproporphyrinogen III + 4 CO2. The protein operates within porphyrin-containing compound metabolism; protoporphyrin-IX biosynthesis; coproporphyrinogen-III from 5-aminolevulinate: step 4/4. Its function is as follows. Catalyzes the decarboxylation of four acetate groups of uroporphyrinogen-III to yield coproporphyrinogen-III. The sequence is that of Uroporphyrinogen decarboxylase from Vibrio vulnificus (strain CMCP6).